A 771-amino-acid polypeptide reads, in one-letter code: Chaperone protein dnaK3 (771 aa).

The residue at position 198 (Thr-198) is a Phosphothreonine; by autocatalysis. Residues 624-771 form a disordered region; it reads FDDDDDYYNR…GWDDDDDDWF (148 aa). 2 stretches are compositionally biased toward basic and acidic residues: residues 630 to 652 and 708 to 734; these read YYNRRPAPRDDYRGGNDYGRYDD and YDDRRSSPQDDYSRGDRQKDYDYRENA.

It belongs to the heat shock protein 70 family.

In terms of biological role, acts as a chaperone. In Synechocystis sp. (strain ATCC 27184 / PCC 6803 / Kazusa), this protein is Chaperone protein dnaK3 (dnaK3).